The primary structure comprises 186 residues: Outer-membrane lipoprotein LolB (186 aa).

The N-terminal stretch at 1–16 (MRRLAVIASLAWALGG) is a signal peptide. The N-palmitoyl cysteine moiety is linked to residue C17. A lipid anchor (S-diacylglycerol cysteine) is attached at C17.

The protein belongs to the LolB family. Monomer.

Its subcellular location is the cell outer membrane. Plays a critical role in the incorporation of lipoproteins in the outer membrane after they are released by the LolA protein. This Thiobacillus denitrificans (strain ATCC 25259 / T1) protein is Outer-membrane lipoprotein LolB.